A 31-amino-acid polypeptide reads, in one-letter code: Antifungal protein 1 (31 aa).

Its subcellular location is the secreted. Its function is as follows. Antifungal activity against C.albicans ATCC 76615. In Musca domestica (House fly), this protein is Antifungal protein 1.